Here is a 255-residue protein sequence, read N- to C-terminus: Imidazole glycerol phosphate synthase subunit HisF (255 aa).

Active-site residues include Asp-12 and Asp-131.

Belongs to the HisA/HisF family. Heterodimer of HisH and HisF.

It is found in the cytoplasm. It catalyses the reaction 5-[(5-phospho-1-deoxy-D-ribulos-1-ylimino)methylamino]-1-(5-phospho-beta-D-ribosyl)imidazole-4-carboxamide + L-glutamine = D-erythro-1-(imidazol-4-yl)glycerol 3-phosphate + 5-amino-1-(5-phospho-beta-D-ribosyl)imidazole-4-carboxamide + L-glutamate + H(+). The protein operates within amino-acid biosynthesis; L-histidine biosynthesis; L-histidine from 5-phospho-alpha-D-ribose 1-diphosphate: step 5/9. IGPS catalyzes the conversion of PRFAR and glutamine to IGP, AICAR and glutamate. The HisF subunit catalyzes the cyclization activity that produces IGP and AICAR from PRFAR using the ammonia provided by the HisH subunit. The protein is Imidazole glycerol phosphate synthase subunit HisF of Ignicoccus hospitalis (strain KIN4/I / DSM 18386 / JCM 14125).